Here is an 856-residue protein sequence, read N- to C-terminus: Leucine--tRNA ligase (856 aa).

Positions Pro42–His52 match the 'HIGH' region motif. A 'KMSKS' region motif is present at residues Lys617 to Ser621. Lys620 is a binding site for ATP.

Belongs to the class-I aminoacyl-tRNA synthetase family.

It localises to the cytoplasm. It catalyses the reaction tRNA(Leu) + L-leucine + ATP = L-leucyl-tRNA(Leu) + AMP + diphosphate. The sequence is that of Leucine--tRNA ligase from Rippkaea orientalis (strain PCC 8801 / RF-1) (Cyanothece sp. (strain PCC 8801)).